The primary structure comprises 485 residues: Aspartyl/glutamyl-tRNA(Asn/Gln) amidotransferase subunit B (485 aa).

Belongs to the GatB/GatE family. GatB subfamily. In terms of assembly, heterotrimer of A, B and C subunits.

It carries out the reaction L-glutamyl-tRNA(Gln) + L-glutamine + ATP + H2O = L-glutaminyl-tRNA(Gln) + L-glutamate + ADP + phosphate + H(+). The catalysed reaction is L-aspartyl-tRNA(Asn) + L-glutamine + ATP + H2O = L-asparaginyl-tRNA(Asn) + L-glutamate + ADP + phosphate + 2 H(+). Allows the formation of correctly charged Asn-tRNA(Asn) or Gln-tRNA(Gln) through the transamidation of misacylated Asp-tRNA(Asn) or Glu-tRNA(Gln) in organisms which lack either or both of asparaginyl-tRNA or glutaminyl-tRNA synthetases. The reaction takes place in the presence of glutamine and ATP through an activated phospho-Asp-tRNA(Asn) or phospho-Glu-tRNA(Gln). The protein is Aspartyl/glutamyl-tRNA(Asn/Gln) amidotransferase subunit B of Borrelia turicatae (strain 91E135).